The following is a 466-amino-acid chain: MGKSLYQKLYDAHIVHKNKDDVPILYIDRHLLHEVTSPQAFEALRLRKRIVRQPNKTFATMDHNVPTTTKNINHSGSMAKEQLDRLTKNCKDFGITLFGLNHPYQGIVHVLAPEQGITLPGMTIVCGDSHTATHGAFGALAFGIGTSEIEHVLATQTLQQIRYKSMQINLSGIIAPQITAKDIILAIIGKIGHGGGSGHVVEFCGPIITLLSMEERMTLCNMAIEMGATSALIAPDRTTYDYLKNRKFSPTGKNWEQALLYWKTLYSDHDAHFDKKFDFDVSNVNPQVTWGTNPSQVISIDQPIPSLESFIDPIERNSAERALIYMKLQSNTYLTDVSIDKVFIGSCTNSRIEDLRVAAQTIKGHHISKNTQAIVVPGSKLVKNQAEKEGLNKIFIQAGFEWRLPGCSMCLAMNNDRLEPGERCASTSNRNFEGRQGRGSRTHLVSPAMAAAAAIAGRFVDIRKFK.

Positions 347, 407, and 410 each coordinate [4Fe-4S] cluster.

This sequence belongs to the aconitase/IPM isomerase family. LeuC type 1 subfamily. Heterodimer of LeuC and LeuD. [4Fe-4S] cluster is required as a cofactor.

The enzyme catalyses (2R,3S)-3-isopropylmalate = (2S)-2-isopropylmalate. It participates in amino-acid biosynthesis; L-leucine biosynthesis; L-leucine from 3-methyl-2-oxobutanoate: step 2/4. In terms of biological role, catalyzes the isomerization between 2-isopropylmalate and 3-isopropylmalate, via the formation of 2-isopropylmaleate. The chain is 3-isopropylmalate dehydratase large subunit from Blochmanniella pennsylvanica (strain BPEN).